The following is a 327-amino-acid chain: Undecaprenyl-phosphate 4-deoxy-4-formamido-L-arabinose transferase (327 aa).

The next 2 helical transmembrane spans lie at 236–256 (LSIFGSVIALLGFAFGLLLVV) and 270–290 (VFMLFAVLFMFIGAQFVGMGL).

The protein belongs to the glycosyltransferase 2 family.

It localises to the cell inner membrane. It catalyses the reaction UDP-4-deoxy-4-formamido-beta-L-arabinose + di-trans,octa-cis-undecaprenyl phosphate = 4-deoxy-4-formamido-alpha-L-arabinopyranosyl di-trans,octa-cis-undecaprenyl phosphate + UDP. Its pathway is glycolipid biosynthesis; 4-amino-4-deoxy-alpha-L-arabinose undecaprenyl phosphate biosynthesis; 4-amino-4-deoxy-alpha-L-arabinose undecaprenyl phosphate from UDP-4-deoxy-4-formamido-beta-L-arabinose and undecaprenyl phosphate: step 1/2. It functions in the pathway bacterial outer membrane biogenesis; lipopolysaccharide biosynthesis. Its function is as follows. Catalyzes the transfer of 4-deoxy-4-formamido-L-arabinose from UDP to undecaprenyl phosphate. The modified arabinose is attached to lipid A and is required for resistance to polymyxin and cationic antimicrobial peptides. This chain is Undecaprenyl-phosphate 4-deoxy-4-formamido-L-arabinose transferase, found in Klebsiella pneumoniae subsp. pneumoniae (strain ATCC 700721 / MGH 78578).